The primary structure comprises 200 residues: uncharacterized protein (200 aa).

Composition is skewed to low complexity over residues 1–13 (MTSA…AAES) and 28–44 (PSPA…AGPR). Disordered stretches follow at residues 1 to 116 (MTSA…GGPG) and 137 to 200 (LPRD…SSFF). Basic residues predominate over residues 88-102 (RCGRPRRRDPRRRRT). Low complexity predominate over residues 189–200 (PSSSSGLLSSFF).

This is an uncharacterized protein from Homo sapiens (Human).